The sequence spans 152 residues: Endoribonuclease YbeY (152 aa).

Zn(2+)-binding residues include His-117, His-121, and His-127.

Belongs to the endoribonuclease YbeY family. Zn(2+) serves as cofactor.

It localises to the cytoplasm. In terms of biological role, single strand-specific metallo-endoribonuclease involved in late-stage 70S ribosome quality control and in maturation of the 3' terminus of the 16S rRNA. The sequence is that of Endoribonuclease YbeY from Borreliella afzelii (strain PKo) (Borrelia afzelii).